The sequence spans 358 residues: Bis(monoacylglycero)phosphate synthase CLN5 (358 aa).

Topologically, residues 1–23 (MAQEVDTAQGAEMRRGAGAARGR) are cytoplasmic. Residues 24–40 (ASWCWALALLWLAVVPG) traverse the membrane as a helical; Signal-anchor for type II membrane protein segment. The Lumenal portion of the chain corresponds to 41 to 358 (WSRVSGIPSR…PIRNKTLSGL (318 aa)). Cystine bridges form between Cys-70–Cys-159 and Cys-77–Cys-165. The active-site Proton acceptor is the His-117. N-linked (GlcNAc...) asparagine glycans are attached at residues Asn-130, Asn-143, Asn-178, and Asn-203. Cys-231 acts as the Nucleophile; Acyl-thioester intermediate in catalysis. N-linked (GlcNAc...) asparagine glycans are attached at residues Asn-255, Asn-271, and Asn-281. The membrane-anchoring stretch occupies residues 304 to 343 (FLLSLLQIFDAVIVHKQFYLFYNFEYWFLPMKFPFIKITY). A glycan (N-linked (GlcNAc...) asparagine) is linked at Asn-352.

The protein belongs to the CLN5 family. Multimer. Interacts with SORT1, RAB5A and RAB7A. Interacts with PPT1, TPP1, CLN3, CLN6, CLN8, ATP5F1A and ATP5F1B. Post-translationally, N-glycosylated with both high mannose and complex type sugars. Glycosylation is important for proper folding and trafficking to the lysosomes. The type II membrane signal anchor is proteolytically cleaved to produce a mature form that is transported to the lysosomes (Bis(monoacylglycero)phosphate synthase CLN5, secreted form). In terms of processing, can undergo proteolytic cleavage at the C-terminus, probably by a cysteine protease and may involve the removal of approximately 10-15 residues from the C-terminal end. In terms of tissue distribution, ubiquitous.

It is found in the lysosome. Its subcellular location is the membrane. It carries out the reaction S-hexadecanoyl-L-cysteinyl-[protein] + H2O = L-cysteinyl-[protein] + hexadecanoate + H(+). The enzyme catalyses 2 1-acyl-sn-glycero-3-phospho-(1'-sn-glycerol) = 1-acyl-sn-glycero-3-phospho-(3'-acyl-sn-1'-glycerol) + sn-glycero-3-phospho-(1'-sn-glycerol). It catalyses the reaction 2 1-(9Z-octadecenoyl)-sn-glycero-3-phospho-(1'-sn-glycerol) = 1-(9Z-octadecenoyl)-sn-glycero-3-phospho-(3'-(9Z-octadecenoyl)-1'-sn-glycerol) + sn-glycero-3-phospho-(1'-sn-glycerol). The catalysed reaction is 2 1-octadecanoyl-sn-glycero-3-phospho-(1'-sn-glycerol) = 1-octadecanoyl-sn-glycero-3-phospho-(3'-octadecanoyl-1'-sn-glycerol) + sn-glycero-3-phospho-(1'-sn-glycerol). It carries out the reaction 2 1-hexadecanoyl-sn-glycero-3-phospho-(1'-sn-glycerol) = 1-hexadecanoyl-sn-glycero-3-phospho-(3'-hexadecanoyl-1'-sn-glycerol) + sn-glycero-3-phospho-(1'-sn-glycerol). The enzyme catalyses 2 1-tetradecanoyl-sn-glycero-3-phospho-(1'-sn-glycerol) = 1-tetradecanoyl-sn-glycero-3-phospho-(3'-tetradecanoyl-1'-sn-glycerol) + sn-glycero-3-phospho-(1'-sn-glycerol). With respect to regulation, anionic phospholipids activate bis(monoacylglycero)phosphate (BMP) synthase activity. Amiodarone, a cationic amphiphilic drug inhibits BMP synthase activity towards liposomal lysophosphatidylglycerol. Palmostatin B inhibits palmitoyl protein thioesterase activity. In terms of biological role, catalyzes the synthesis of bis(monoacylglycero)phosphate (BMP) via transacylation of 2 molecules of lysophosphatidylglycerol (LPG). BMP also known as lysobisphosphatidic acid plays a key role in the formation of intraluminal vesicles and in maintaining intracellular cholesterol homeostasis. Can use only LPG as the exclusive lysophospholipid acyl donor for base exchange and displays BMP synthase activity towards various LPGs (LPG 14:0, LPG 16:0, LPG 18:0, LPG 18:1) with a higher preference for longer chain lengths. Plays a role in influencing the retrograde trafficking of lysosomal sorting receptors SORT1 and IGF2R from the endosomes to the trans-Golgi network by controlling the recruitment of retromer complex to the endosomal membrane. Regulates the localization and activation of RAB7A which is required to recruit the retromer complex to the endosomal membrane. Exhibits palmitoyl protein thioesterase (S-depalmitoylation) activity in vitro and most likely plays a role in protein S-depalmitoylation. In Homo sapiens (Human), this protein is Bis(monoacylglycero)phosphate synthase CLN5 (CLN5).